The sequence spans 348 residues: Anthranilate phosphoribosyltransferase (348 aa).

5-phospho-alpha-D-ribose 1-diphosphate-binding positions include G81, 84-85 (GD), T89, 91-94 (NIST), 109-117 (KHGNRSSSG), and S121. G81 contacts anthranilate. Residue S93 participates in Mg(2+) binding. N112 is a binding site for anthranilate. R167 lines the anthranilate pocket. Residues D226 and E227 each coordinate Mg(2+).

This sequence belongs to the anthranilate phosphoribosyltransferase family. As to quaternary structure, homodimer. The cofactor is Mg(2+).

It catalyses the reaction N-(5-phospho-beta-D-ribosyl)anthranilate + diphosphate = 5-phospho-alpha-D-ribose 1-diphosphate + anthranilate. It functions in the pathway amino-acid biosynthesis; L-tryptophan biosynthesis; L-tryptophan from chorismate: step 2/5. Functionally, catalyzes the transfer of the phosphoribosyl group of 5-phosphorylribose-1-pyrophosphate (PRPP) to anthranilate to yield N-(5'-phosphoribosyl)-anthranilate (PRA). This is Anthranilate phosphoribosyltransferase from Nitrosopumilus maritimus (strain SCM1).